Reading from the N-terminus, the 113-residue chain is uncharacterized protein (113 aa).

Residues 1 to 29 (MLVVYMCIWVLYLLLFLFLFLFIASPASL) form the signal peptide. Transmembrane regions (helical) follow at residues 34–54 (THIL…CAFF) and 56–76 (QVLC…FYFF).

The protein localises to the membrane. This is an uncharacterized protein from Saccharomyces cerevisiae (strain ATCC 204508 / S288c) (Baker's yeast).